The chain runs to 99 residues: MKTQVLFLVFALAAVMVSGDATPHVYCGRRLATMLSFVCDNQYQVKRTPYISPENEGYGWRWLEPQRARQLDGARGKRQGIAEECCNKPCTENELLGYC.

Residues 1-19 (MKTQVLFLVFALAAVMVSG) form the signal peptide. 3 disulfides stabilise this stretch: Cys-27-Cys-86, Cys-39-Cys-99, and Cys-85-Cys-90. The propeptide at 48 to 76 (TPYISPENEGYGWRWLEPQRARQLDGARG) is c peptide like.

Belongs to the insulin family. As to quaternary structure, heterodimer of a B chain and an A chain linked by two disulfide bonds.

Its subcellular location is the secreted. Its function is as follows. Brain peptide responsible for activation of prothoracic glands to produce ecdysone in insects. In Samia cynthia (Ailanthus silkmoth), this protein is Bombyxin A-1 homolog (SBXA1).